Consider the following 294-residue polypeptide: Sarcotoxin II-2 (294 aa).

The first 22 residues, 1–22, serve as a signal peptide directing secretion; that stretch reads MKSFVFFAACFAIVALNSLAHA. A propeptide spans 23–24 (removed by a dipeptidylpeptidase); the sequence is YP. Pyrrolidone carboxylic acid is present on Gln25. Residue Arg293 is modified to Arginine amide.

This sequence belongs to the attacin/sarcotoxin-2 family. As to expression, synthesized by the fat body and is eventually secreted into the hemolymph.

Its subcellular location is the secreted. In terms of biological role, sarcotoxin II is an antibacterial protein which plays a role in the inflammatory response of this insect. The main effect of sarcotoxin II on E.coli may be the inhibition of cell wall synthesis, including septum formation. This chain is Sarcotoxin II-2, found in Sarcophaga peregrina (Flesh fly).